The chain runs to 132 residues: Small ribosomal subunit protein uS8 (132 aa).

This sequence belongs to the universal ribosomal protein uS8 family. Part of the 30S ribosomal subunit. Contacts proteins S5 and S12.

In terms of biological role, one of the primary rRNA binding proteins, it binds directly to 16S rRNA central domain where it helps coordinate assembly of the platform of the 30S subunit. The chain is Small ribosomal subunit protein uS8 from Caldicellulosiruptor bescii (strain ATCC BAA-1888 / DSM 6725 / KCTC 15123 / Z-1320) (Anaerocellum thermophilum).